A 322-amino-acid polypeptide reads, in one-letter code: Aldo-keto reductase family 1 member C23 (322 aa).

20–24 (GFGTY) is a binding site for NADP(+). Lys31 lines the substrate pocket. Position 50 (Asp50) interacts with NADP(+). Residue Tyr55 is the Proton donor of the active site. A substrate-binding site is contributed by His117. NADP(+)-binding positions include 166–167 (SN), Gln190, 216–221 (YSALGS), and 269–279 (KSYNEKRIKEN).

Belongs to the aldo/keto reductase family. As to quaternary structure, monomer. Detected in follicle granulosa cells (at protein level). Detected in heart, lung, liver, kidney, stomach, uterus, testis, skeletal muscle and granulosa cells of the follicle wall.

The protein resides in the cytoplasm. Functionally, NADP-dependent oxidoreductase that has 20-alpha-hydroxysteroid dehydrogenase activity. In Equus caballus (Horse), this protein is Aldo-keto reductase family 1 member C23 (AKR1C23).